The sequence spans 84 residues: CLAVATA3/ESR (CLE)-related protein 13 (84 aa).

The N-terminal stretch at 1-29 (MGRYTTDQVQVYVLVIVLCTFFSTLQARS) is a signal peptide. The disordered stretch occupies residues 57–84 (KQVRDISGDRLSPAGPDPQHNGRSPPRK). 2 positions are modified to hydroxyproline: P69 and P72. O-linked (Ara...) hydroxyproline glycosylation is present at P72.

It belongs to the CLV3/ESR signal peptide family. The O-glycosylation (arabinosylation) of the hydroxyproline Pro-72 enhances binding affinity of the CLE13p peptide for its receptor. In terms of tissue distribution, expressed in young nodules throughout the central tissue. Expressed in the apical region of elongated nodules, corresponding to the meristematic and early infection zones.

It is found in the secreted. It localises to the extracellular space. Functionally, signaling peptide involved in the regulation of nodulation. Moves from root to shoot to function with the receptor kinase SUNN, in a signaling pathway that plays roles during cellular differentiation, both at the onset of nodulation, and later during nodule meristem development and subsequent homeostasis. Interacts with SUNN signaling to control nodule numbers. SUNN is involved in the autoregulation of nodulation (AON), a long distance systemic signaling from root to shoot and back again, which allows legumes to limit the number of root nodules formed based on available nitrogen and previous rhizobial colonization. In Medicago truncatula (Barrel medic), this protein is CLAVATA3/ESR (CLE)-related protein 13.